The sequence spans 514 residues: 1-pyrroline-5-carboxylate dehydrogenase (514 aa).

Residues Glu286 and Cys320 contribute to the active site.

The protein belongs to the aldehyde dehydrogenase family. RocA subfamily.

It carries out the reaction L-glutamate 5-semialdehyde + NAD(+) + H2O = L-glutamate + NADH + 2 H(+). It functions in the pathway amino-acid degradation; L-proline degradation into L-glutamate; L-glutamate from L-proline: step 2/2. This is 1-pyrroline-5-carboxylate dehydrogenase from Staphylococcus aureus (strain MW2).